We begin with the raw amino-acid sequence, 275 residues long: Light-independent protochlorophyllide reductase iron-sulfur ATP-binding protein (275 aa).

Residues Gly12–Thr17 and Lys41 contribute to the ATP site. Ser16 lines the Mg(2+) pocket. The [4Fe-4S] cluster site is built by Cys97 and Cys131. Asn182–Arg183 is a binding site for ATP.

This sequence belongs to the NifH/BchL/ChlL family. As to quaternary structure, homodimer. Protochlorophyllide reductase is composed of three subunits; BchL, BchN and BchB. [4Fe-4S] cluster serves as cofactor.

The enzyme catalyses chlorophyllide a + oxidized 2[4Fe-4S]-[ferredoxin] + 2 ADP + 2 phosphate = protochlorophyllide a + reduced 2[4Fe-4S]-[ferredoxin] + 2 ATP + 2 H2O. Its pathway is porphyrin-containing compound metabolism; bacteriochlorophyll biosynthesis (light-independent). In terms of biological role, component of the dark-operative protochlorophyllide reductase (DPOR) that uses Mg-ATP and reduced ferredoxin to reduce ring D of protochlorophyllide (Pchlide) to form chlorophyllide a (Chlide). This reaction is light-independent. The L component serves as a unique electron donor to the NB-component of the complex, and binds Mg-ATP. This Chlorobium phaeobacteroides (strain DSM 266 / SMG 266 / 2430) protein is Light-independent protochlorophyllide reductase iron-sulfur ATP-binding protein.